The sequence spans 325 residues: Lipoyl synthase (325 aa).

Residues cysteine 72, cysteine 77, cysteine 83, cysteine 98, cysteine 102, cysteine 105, and serine 312 each coordinate [4Fe-4S] cluster. The 218-residue stretch at 84 to 301 (FAGGTATFMI…AEEGERMGFK (218 aa)) folds into the Radical SAM core domain.

The protein belongs to the radical SAM superfamily. Lipoyl synthase family. [4Fe-4S] cluster serves as cofactor.

The protein localises to the cytoplasm. It carries out the reaction [[Fe-S] cluster scaffold protein carrying a second [4Fe-4S](2+) cluster] + N(6)-octanoyl-L-lysyl-[protein] + 2 oxidized [2Fe-2S]-[ferredoxin] + 2 S-adenosyl-L-methionine + 4 H(+) = [[Fe-S] cluster scaffold protein] + N(6)-[(R)-dihydrolipoyl]-L-lysyl-[protein] + 4 Fe(3+) + 2 hydrogen sulfide + 2 5'-deoxyadenosine + 2 L-methionine + 2 reduced [2Fe-2S]-[ferredoxin]. It participates in protein modification; protein lipoylation via endogenous pathway; protein N(6)-(lipoyl)lysine from octanoyl-[acyl-carrier-protein]: step 2/2. Catalyzes the radical-mediated insertion of two sulfur atoms into the C-6 and C-8 positions of the octanoyl moiety bound to the lipoyl domains of lipoate-dependent enzymes, thereby converting the octanoylated domains into lipoylated derivatives. The polypeptide is Lipoyl synthase (Azotobacter vinelandii (strain DJ / ATCC BAA-1303)).